A 212-amino-acid chain; its full sequence is Protein ERP5 (212 aa).

The signal sequence occupies residues 1 to 20 (MKYNIVHGICLLFAITQAVG). Topologically, residues 21–178 (AVHFYAKSGE…FRNQSESANS (158 aa)) are lumenal. Residues 31–124 (TKCFYEHLSR…TLRVFIELEI (94 aa)) enclose the GOLD domain. Asn-171 carries N-linked (GlcNAc...) asparagine glycosylation. A helical membrane pass occupies residues 179–199 (KIMTWSVFQLLILLGTCAFQL). Residues 200–212 (RYLKNFFVKQKVV) lie on the Cytoplasmic side of the membrane.

This sequence belongs to the EMP24/GP25L family.

The protein resides in the endoplasmic reticulum membrane. In terms of biological role, involved in vesicular protein trafficking. The chain is Protein ERP5 (ERP5) from Saccharomyces cerevisiae (strain ATCC 204508 / S288c) (Baker's yeast).